The following is a 184-amino-acid chain: GTP cyclohydrolase 1 (184 aa).

The Zn(2+) site is built by cysteine 75, histidine 78, and cysteine 146.

It belongs to the GTP cyclohydrolase I family. As to quaternary structure, homomer.

It carries out the reaction GTP + H2O = 7,8-dihydroneopterin 3'-triphosphate + formate + H(+). The protein operates within cofactor biosynthesis; 7,8-dihydroneopterin triphosphate biosynthesis; 7,8-dihydroneopterin triphosphate from GTP: step 1/1. The chain is GTP cyclohydrolase 1 from Streptococcus pneumoniae (strain Hungary19A-6).